Here is a 364-residue protein sequence, read N- to C-terminus: Fructose-bisphosphate aldolase B (364 aa).

Position 2 is an N-acetylalanine (A2). The residue at position 13 (K13) is an N6-succinyllysine. S36 carries the phosphoserine modification. T39 is modified (phosphothreonine). R43 is a beta-D-fructose 1,6-bisphosphate binding site. At S89 the chain carries Phosphoserine. T119 carries the phosphothreonine modification. K121 carries the N6-succinyllysine modification. The residue at position 132 (S132) is a Phosphoserine. E188 serves as the catalytic Proton acceptor. The active-site Schiff-base intermediate with dihydroxyacetone-P is K230. Phosphoserine is present on residues S272, S276, S299, and S301. 272 to 274 (SGG) contacts beta-D-fructose 1,6-bisphosphate. R304 is a beta-D-fructose 1,6-bisphosphate binding site. A Phosphoserine modification is found at S309. K317 carries the N6-succinyllysine modification.

It belongs to the class I fructose-bisphosphate aldolase family. As to quaternary structure, homotetramer. Interacts with BBS1, BBS2, BBS4 and BBS7. Forms a ternary complex with G6PD and TP53; this interaction is direct.

The protein localises to the cytoplasm. It is found in the cytosol. Its subcellular location is the cytoskeleton. It localises to the microtubule organizing center. The protein resides in the centrosome. The protein localises to the centriolar satellite. It catalyses the reaction beta-D-fructose 1,6-bisphosphate = D-glyceraldehyde 3-phosphate + dihydroxyacetone phosphate. It carries out the reaction beta-D-fructose 1-phosphate = D-glyceraldehyde + dihydroxyacetone phosphate. Its pathway is carbohydrate degradation; glycolysis; D-glyceraldehyde 3-phosphate and glycerone phosphate from D-glucose: step 4/4. The protein operates within carbohydrate biosynthesis; gluconeogenesis. It functions in the pathway carbohydrate metabolism; fructose metabolism. In terms of biological role, catalyzes the aldol cleavage of fructose 1,6-biphosphate to form two triosephosphates dihydroxyacetone phosphate and D-glyceraldehyde 3-phosphate in glycolysis as well as the reverse stereospecific aldol addition reaction in gluconeogenesis. In fructolysis, metabolizes fructose 1-phosphate derived from the phosphorylation of dietary fructose by fructokinase into dihydroxyacetone phosphate and D-glyceraldehyde. Acts as an adapter independently of its enzymatic activity, exerts a tumor suppressor role by stabilizing the ternary complex with G6PD and TP53 to inhibit G6PD activity and keep oxidative pentose phosphate metabolism in check. The polypeptide is Fructose-bisphosphate aldolase B (Aldob) (Rattus norvegicus (Rat)).